The primary structure comprises 359 residues: Guanine nucleotide-binding protein G(q) subunit alpha (359 aa).

2 S-palmitoyl cysteine lipidation sites follow: C9 and C10. The 322-residue stretch at 38–359 (RELKLLLLGT…QLNLKEYNLV (322 aa)) folds into the G-alpha domain. Residues 41-54 (KLLLLGTGESGKST) form a G1 motif region. Residues S50, G51, K52, S53, T54, S156, L180, R181, and R183 each coordinate GTP. S53 contacts Mg(2+). Residues 178–186 (DVLRVRVPT) form a G2 motif region. T186 contributes to the Mg(2+) binding site. The segment at 201–210 (FRMVDVGGQR) is G3 motif. A 5-glutamyl histamine modification is found at Q209. Positions 270-277 (ILFLNKKD) are G4 motif. GTP is bound by residues N274, K275, D277, and A331. Residues 329–334 (TCATDT) are G5 motif.

Belongs to the G-alpha family. G(q) subfamily. G proteins are composed of 3 units; alpha, beta and gamma. The alpha chain contains the guanine nucleotide binding site. Interacts (GDP-bound form) with RIC8A (via C-terminus); promoting GNAQ folding and association with the plasma membrane. Binds NHERF1. Forms a complex with PECAM1 and BDKRB2. Interacts with GAS2L2. Post-translationally, palmitoylated by ZDHHC3 and ZDHHC7. Palmitoylation occurs in the Golgi and participates in the localization of GNAQ to the plasma membrane. In terms of processing, histaminylated at Gln-209 residues by TGM2.

Its subcellular location is the cell membrane. The protein localises to the golgi apparatus. The protein resides in the nucleus. It is found in the nucleus membrane. It catalyses the reaction GTP + H2O = GDP + phosphate + H(+). In terms of biological role, guanine nucleotide-binding proteins (G proteins) function as transducers downstream of G protein-coupled receptors (GPCRs) in numerous signaling cascades. The alpha chain contains the guanine nucleotide binding site and alternates between an active, GTP-bound state and an inactive, GDP-bound state. Signaling by an activated GPCR promotes GDP release and GTP binding. The alpha subunit has a low GTPase activity that converts bound GTP to GDP, thereby terminating the signal. Both GDP release and GTP hydrolysis are modulated by numerous regulatory proteins. Signaling is mediated via phospholipase C-beta-dependent inositol lipid hydrolysis for signal propagation: activates phospholipase C-beta: following GPCR activation, GNAQ activates PLC-beta (PLCB1, PLCB2, PLCB3 or PLCB4), leading to production of diacylglycerol (DAG) and inositol 1,4,5-trisphosphate (IP3). Required for platelet activation. Regulates B-cell selection and survival and is required to prevent B-cell-dependent autoimmunity. Regulates chemotaxis of BM-derived neutrophils and dendritic cells (in vitro). Transduces FFAR4 signaling in response to long-chain fatty acids (LCFAs). Together with GNA11, required for heart development. In Rattus norvegicus (Rat), this protein is Guanine nucleotide-binding protein G(q) subunit alpha (Gnaq).